A 196-amino-acid chain; its full sequence is Ribosome maturation factor RimP (196 aa).

The disordered stretch occupies residues 164–196 (LAPQKPNKPGPKKPGHEKKKPSNESAAGKPRAE). The span at 173 to 182 (GPKKPGHEKK) shows a compositional bias: basic residues.

The protein belongs to the RimP family.

It localises to the cytoplasm. Functionally, required for maturation of 30S ribosomal subunits. This chain is Ribosome maturation factor RimP, found in Xanthomonas euvesicatoria pv. vesicatoria (strain 85-10) (Xanthomonas campestris pv. vesicatoria).